The following is a 56-amino-acid chain: Large ribosomal subunit protein bL33A (56 aa).

It belongs to the bacterial ribosomal protein bL33 family.

In Cutibacterium acnes (strain DSM 16379 / KPA171202) (Propionibacterium acnes), this protein is Large ribosomal subunit protein bL33A.